We begin with the raw amino-acid sequence, 928 residues long: Probable outer membrane protein pmp11 (928 aa).

The signal sequence occupies residues 1 to 24 (MKTSIPWVLVSSVLAFSCHLQSLA). Residues 627–928 (GMEHKQGFWV…NVDVGTKLRF (302 aa)) form the Autotransporter domain.

This sequence belongs to the PMP outer membrane protein family.

The protein resides in the secreted. It localises to the cell wall. Its subcellular location is the cell outer membrane. This is Probable outer membrane protein pmp11 (pmp11) from Chlamydia pneumoniae (Chlamydophila pneumoniae).